Reading from the N-terminus, the 156-residue chain is Ribosomal RNA large subunit methyltransferase H (156 aa).

S-adenosyl-L-methionine-binding positions include glycine 104 and leucine 123–leucine 128.

This sequence belongs to the RNA methyltransferase RlmH family. Homodimer.

It localises to the cytoplasm. It catalyses the reaction pseudouridine(1915) in 23S rRNA + S-adenosyl-L-methionine = N(3)-methylpseudouridine(1915) in 23S rRNA + S-adenosyl-L-homocysteine + H(+). Functionally, specifically methylates the pseudouridine at position 1915 (m3Psi1915) in 23S rRNA. In Nitrosospira multiformis (strain ATCC 25196 / NCIMB 11849 / C 71), this protein is Ribosomal RNA large subunit methyltransferase H.